A 295-amino-acid chain; its full sequence is Glutamyl-Q tRNA(Asp) synthetase (295 aa).

L-glutamate-binding positions include arginine 9–threonine 13 and glutamate 45. The short motif at proline 12 to serine 22 is the 'HIGH' region element. Residues cysteine 101, cysteine 103, tyrosine 115, and cysteine 119 each coordinate Zn(2+). L-glutamate contacts are provided by tyrosine 172 and arginine 190. Residues lysine 228–serine 232 carry the 'KMSKS' region motif. Lysine 231 contacts ATP.

This sequence belongs to the class-I aminoacyl-tRNA synthetase family. GluQ subfamily. Requires Zn(2+) as cofactor.

Functionally, catalyzes the tRNA-independent activation of glutamate in presence of ATP and the subsequent transfer of glutamate onto a tRNA(Asp). Glutamate is transferred on the 2-amino-5-(4,5-dihydroxy-2-cyclopenten-1-yl) moiety of the queuosine in the wobble position of the QUC anticodon. This is Glutamyl-Q tRNA(Asp) synthetase from Pseudomonas putida (strain W619).